Here is a 393-residue protein sequence, read N- to C-terminus: Dwarfin sma-3 (393 aa).

One can recognise an MH1 domain in the interval 10–139 (PAVKKLLGWK…YQRLSRPQGL (130 aa)). Residues cysteine 65, cysteine 110, cysteine 124, and histidine 129 each contribute to the Zn(2+) site. Residues 136–190 (PQGLNSSMPSPQPISSPNTIWQSSGSSTASCASSPSPSVFSEDGGEVQVHQRPPP) form a disordered region. Residues 141 to 176 (SSMPSPQPISSPNTIWQSSGSSTASCASSPSPSVFS) show a composition bias toward low complexity. One can recognise an MH2 domain in the interval 197 to 393 (WAQITYFELN…TNLMEPNSMT (197 aa)).

This sequence belongs to the dwarfin/SMAD family.

It localises to the cytoplasm. The protein resides in the nucleus. Its function is as follows. Involved in TGF-beta pathway. Plays a role in male tail tip morphogenesis. This chain is Dwarfin sma-3, found in Caenorhabditis elegans.